The following is a 404-amino-acid chain: L-cysteine:1D-myo-inositol 2-amino-2-deoxy-alpha-D-glucopyranoside ligase 1 (404 aa).

Cys-47 provides a ligand contact to Zn(2+). L-cysteinyl-5'-AMP is bound by residues 47–50 (CGIT), Thr-62, and 85–87 (NIT). The 'HIGH' region signature appears at 49–59 (ITPYDSTHLGH). The 'ERGGDP' region motif lies at 188-193 (ERGGDP). L-cysteinyl-5'-AMP is bound at residue Trp-228. Cys-232 lines the Zn(2+) pocket. Residue 250–252 (GSD) participates in L-cysteinyl-5'-AMP binding. His-257 contributes to the Zn(2+) binding site. Ile-284 is an L-cysteinyl-5'-AMP binding site. Residues 290–294 (KMSKS) carry the 'KMSKS' region motif.

The protein belongs to the class-I aminoacyl-tRNA synthetase family. MshC subfamily. Monomer. The cofactor is Zn(2+).

The catalysed reaction is 1D-myo-inositol 2-amino-2-deoxy-alpha-D-glucopyranoside + L-cysteine + ATP = 1D-myo-inositol 2-(L-cysteinylamino)-2-deoxy-alpha-D-glucopyranoside + AMP + diphosphate + H(+). Its function is as follows. Catalyzes the ATP-dependent condensation of GlcN-Ins and L-cysteine to form L-Cys-GlcN-Ins. The protein is L-cysteine:1D-myo-inositol 2-amino-2-deoxy-alpha-D-glucopyranoside ligase 1 of Corynebacterium urealyticum (strain ATCC 43042 / DSM 7109).